Here is a 282-residue protein sequence, read N- to C-terminus: Ribonuclease P protein subunit p38 (282 aa).

Disordered stretches follow at residues 1-21 and 61-103; these read MAAA…PLPV and EDRK…QASG. Ala-2 is modified (N-acetylalanine). Ser-12 is modified (phosphoserine). Over residues 88 to 97 the composition is skewed to basic and acidic residues; it reads EDLKKEKPKG. Ser-226 and Ser-235 each carry phosphoserine. The segment at 262-282 is disordered; that stretch reads KLIPNPNKIRKPPKSKRTASK. The span at 269–282 shows a compositional bias: basic residues; that stretch reads KIRKPPKSKRTASK.

The protein belongs to the eukaryotic ribosomal protein eL8 family. Component of nuclear RNase P and RNase MRP ribonucleoproteins. RNase P consists of a catalytic RNA moiety and about 10 protein subunits; POP1, POP4, POP5, POP7, RPP14, RPP21, RPP25, RPP30, RPP38 and RPP40. Within the RNase P complex, POP1, POP7 and RPP25 form the 'finger' subcomplex, POP5, RPP14, RPP40 and homodimeric RPP30 form the 'palm' subcomplex, and RPP21, POP4 and RPP38 form the 'wrist' subcomplex. All subunits of the RNase P complex interact with the catalytic RNA. Several subunits of RNase P are also part of the RNase MRP complex. RNase MRP consists of a catalytic RNA moiety and about 8 protein subunits; POP1, POP7, RPP25, RPP30, RPP38, RPP40 and possibly also POP4 and POP5.

It is found in the nucleus. Its subcellular location is the nucleolus. Its function is as follows. Component of ribonuclease P, a ribonucleoprotein complex that generates mature tRNA molecules by cleaving their 5'-ends. Also a component of the MRP ribonuclease complex, which cleaves pre-rRNA sequences. This is Ribonuclease P protein subunit p38 (RPP38) from Bos taurus (Bovine).